Reading from the N-terminus, the 890-residue chain is UPF0182 protein Ppro_2689 (890 aa).

Transmembrane regions (helical) follow at residues 6–26 (FILILVIVALTVSLLSFLLAF), 50–70 (AGSGLLFAGVLFAGTLLNLLL), 102–122 (LGIPACAILALLVGQWGAMQW), 157–177 (TITAFAGFTLLTSLFLTVLVY), 200–220 (LAILLLLLSCVIAAGFHLDCF), 244–264 (TYRILTILAPLAGTALAIGLW), and 266–286 (GAWRMALLAPLAVIVLHVIGI).

Belongs to the UPF0182 family.

The protein resides in the cell membrane. The polypeptide is UPF0182 protein Ppro_2689 (Pelobacter propionicus (strain DSM 2379 / NBRC 103807 / OttBd1)).